Reading from the N-terminus, the 718-residue chain is Probable protein S-acyltransferase 19 (718 aa).

The next 2 membrane-spanning stretches (helical) occupy residues 16–36 (VVAI…FAPF) and 41–61 (IWEY…FVLY). The tract at residues 100–125 (ETGSHLQSSPSVASRTSTLPNSSVKG) is disordered. Residues 103–124 (SHLQSSPSVASRTSTLPNSSVK) show a composition bias toward polar residues. A DHHC domain is found at 174-224 (LFCTLCNAEVRKFSKHCRSCDKCVDCFDHHCRWLNNCVGRKNYMTFISLMA). Cys204 acts as the S-palmitoyl cysteine intermediate in catalysis. A run of 2 helical transmembrane segments spans residues 222–242 (LMAV…AVIV) and 277–297 (AVSM…MLLI). 3 disordered regions span residues 454-511 (SSVS…HVHE), 598-649 (PATT…QQQQ), and 664-718 (GPLV…GTRK). Composition is skewed to polar residues over residues 479 to 488 (CRNSYAPSQG) and 598 to 626 (PATT…TQNP). Residues 673–687 (DGLRHDGDSGREGQD) are compositionally biased toward basic and acidic residues.

The protein belongs to the DHHC palmitoyltransferase family.

The protein localises to the cell membrane. The enzyme catalyses L-cysteinyl-[protein] + hexadecanoyl-CoA = S-hexadecanoyl-L-cysteinyl-[protein] + CoA. Functionally, palmitoyl acyltransferase. The protein is Probable protein S-acyltransferase 19 (PAT19) of Arabidopsis thaliana (Mouse-ear cress).